Reading from the N-terminus, the 261-residue chain is Tryptophan synthase alpha chain (261 aa).

Residues Glu49 and Asp60 each act as proton acceptor in the active site.

It belongs to the TrpA family. In terms of assembly, tetramer of two alpha and two beta chains.

The catalysed reaction is (1S,2R)-1-C-(indol-3-yl)glycerol 3-phosphate + L-serine = D-glyceraldehyde 3-phosphate + L-tryptophan + H2O. It functions in the pathway amino-acid biosynthesis; L-tryptophan biosynthesis; L-tryptophan from chorismate: step 5/5. In terms of biological role, the alpha subunit is responsible for the aldol cleavage of indoleglycerol phosphate to indole and glyceraldehyde 3-phosphate. This Leifsonia xyli subsp. xyli (strain CTCB07) protein is Tryptophan synthase alpha chain.